Here is a 130-residue protein sequence, read N- to C-terminus: Large ribosomal subunit protein bL20 (130 aa).

Belongs to the bacterial ribosomal protein bL20 family.

Its function is as follows. Binds directly to 23S ribosomal RNA and is necessary for the in vitro assembly process of the 50S ribosomal subunit. It is not involved in the protein synthesizing functions of that subunit. The polypeptide is Large ribosomal subunit protein bL20 (Salinispora arenicola (strain CNS-205)).